Here is a 102-residue protein sequence, read N- to C-terminus: Signal recognition particle 19 kDa protein (102 aa).

This sequence belongs to the SRP19 family. In terms of assembly, part of the signal recognition particle protein translocation system, which is composed of SRP and FtsY. Archaeal SRP consists of a 7S RNA molecule of 300 nucleotides and two protein subunits: SRP54 and SRP19.

The protein localises to the cytoplasm. In terms of biological role, involved in targeting and insertion of nascent membrane proteins into the cytoplasmic membrane. Binds directly to 7S RNA and mediates binding of the 54 kDa subunit of the SRP. This chain is Signal recognition particle 19 kDa protein, found in Saccharolobus solfataricus (strain ATCC 35092 / DSM 1617 / JCM 11322 / P2) (Sulfolobus solfataricus).